The chain runs to 265 residues: DNA repair protein RecO (265 aa).

This sequence belongs to the RecO family.

Functionally, involved in DNA repair and RecF pathway recombination. This is DNA repair protein RecO from Mycobacterium marinum (strain ATCC BAA-535 / M).